Consider the following 236-residue polypeptide: Ubiquinone biosynthesis O-methyltransferase (236 aa).

S-adenosyl-L-methionine is bound by residues Arg39, Gly59, Asp80, and Met124.

It belongs to the methyltransferase superfamily. UbiG/COQ3 family.

The enzyme catalyses a 3-demethylubiquinol + S-adenosyl-L-methionine = a ubiquinol + S-adenosyl-L-homocysteine + H(+). It carries out the reaction a 3-(all-trans-polyprenyl)benzene-1,2-diol + S-adenosyl-L-methionine = a 2-methoxy-6-(all-trans-polyprenyl)phenol + S-adenosyl-L-homocysteine + H(+). It functions in the pathway cofactor biosynthesis; ubiquinone biosynthesis. Its function is as follows. O-methyltransferase that catalyzes the 2 O-methylation steps in the ubiquinone biosynthetic pathway. This chain is Ubiquinone biosynthesis O-methyltransferase, found in Shewanella oneidensis (strain ATCC 700550 / JCM 31522 / CIP 106686 / LMG 19005 / NCIMB 14063 / MR-1).